The sequence spans 556 residues: Optineurin (556 aa).

A disordered region spans residues 1 to 33 (MSSKPQIRPAENGEHCRSKMENGMDSMAPPTLS). Residues 11–22 (ENGEHCRSKMEN) are compositionally biased toward basic and acidic residues. A coiled-coil region spans residues 38-164 (EEMVQQMKEL…SELQVKLNIA (127 aa)). An LIR motif is present at residues 168-173 (DSFVEI). Residues 219-487 (VSQLLCCLRN…LLKEQQNLED (269 aa)) are a coiled coil. The tract at residues 245-274 (ERLSKMENETSNCLESGTQTNQEEESSEAI) is disordered. The span at 253 to 265 (ETSNCLESGTQTN) shows a compositional bias: polar residues. The short motif at 453-458 (DFHAER) is the UBAN element. Residues 496–524 (MQNRHGARAPDREHSPRLVQRGTGSQEWP) form a disordered region. The segment at 526–556 (QRNISIYSCPKCEEILPDLDTLQIHVMDCIN) adopts a CCHC NOA-type zinc-finger fold. Zn(2+) contacts are provided by C534, C537, H550, and C554.

As to quaternary structure, binds to linear ubiquitin chains. Interacts with LC3 family members. Expressed in erythrocytes, skeletal muscle, heart, spleen and brain. Weakly expressed in lung and liver (at protein level).

The protein resides in the cytoplasm. The protein localises to the perinuclear region. It is found in the golgi apparatus. It localises to the trans-Golgi network. Its subcellular location is the cytoplasmic vesicle. The protein resides in the recycling endosome. The protein localises to the autophagosome. Its function is as follows. Probably part of the TNF-alpha signaling pathway that can shift the equilibrium toward induction of cell death. May act by regulating membrane trafficking and cellular morphogenesis. May act as autophagy receptor that interacts directly with both the cargo to become degraded and an autophagy modifier of the MAP1 LC3 family. The protein is Optineurin (OPTN) of Gallus gallus (Chicken).